A 364-amino-acid chain; its full sequence is Fructose-bisphosphate aldolase A (364 aa).

A Phosphotyrosine modification is found at Tyr5. Thr9 carries the post-translational modification Phosphothreonine. Phosphoserine occurs at positions 36 and 39. Lys42 is subject to N6-acetyllysine; alternate. A Glycyl lysine isopeptide (Lys-Gly) (interchain with G-Cter in SUMO1); alternate cross-link involves residue Lys42. A Glycyl lysine isopeptide (Lys-Gly) (interchain with G-Cter in SUMO2); alternate cross-link involves residue Lys42. Arg43 contacts beta-D-fructose 1,6-bisphosphate. Ser46 carries the phosphoserine modification. Residue Lys99 is modified to N6-(2-hydroxyisobutyryl)lysine. Residue Lys108 is modified to N6-acetyllysine. Lys111 bears the N6-acetyllysine; alternate mark. Lys111 carries the N6-malonyllysine; alternate modification. Ser132 bears the Phosphoserine mark. N6-(2-hydroxyisobutyryl)lysine is present on Lys147. Glu188 functions as the Proton acceptor in the catalytic mechanism. Catalysis depends on Lys230, which acts as the Schiff-base intermediate with dihydroxyacetone-P. Ser272 is subject to Phosphoserine. Residues 272–274 (SGG), Ser301, and Arg304 each bind beta-D-fructose 1,6-bisphosphate. At Lys312 the chain carries N6-malonyllysine. The residue at position 330 (Lys330) is an N6-acetyllysine.

This sequence belongs to the class I fructose-bisphosphate aldolase family. In terms of assembly, homotetramer. Interacts with SNX9 and WAS. Interacts with FBP2; the interaction blocks FBP2 inhibition by physiological concentrations of AMP and reduces inhibition by Ca(2+). As to expression, expressed in muscle, brain and hepatoma cells.

Its subcellular location is the cytoplasm. It localises to the myofibril. The protein resides in the sarcomere. The protein localises to the i band. It is found in the m line. The catalysed reaction is beta-D-fructose 1,6-bisphosphate = D-glyceraldehyde 3-phosphate + dihydroxyacetone phosphate. Its pathway is carbohydrate degradation; glycolysis; D-glyceraldehyde 3-phosphate and glycerone phosphate from D-glucose: step 4/4. Its function is as follows. Catalyzes the reversible conversion of beta-D-fructose 1,6-bisphosphate (FBP) into two triose phosphate and plays a key role in glycolysis and gluconeogenesis. In addition, may also function as scaffolding protein. In Rattus norvegicus (Rat), this protein is Fructose-bisphosphate aldolase A (Aldoa).